Here is a 190-residue protein sequence, read N- to C-terminus: Peptidyl-tRNA hydrolase (190 aa).

Tyr-17 contributes to the tRNA binding site. The Proton acceptor role is filled by His-22. Residues Tyr-67 and Asn-69 each coordinate tRNA.

Belongs to the PTH family. As to quaternary structure, monomer.

The protein resides in the cytoplasm. It catalyses the reaction an N-acyl-L-alpha-aminoacyl-tRNA + H2O = an N-acyl-L-amino acid + a tRNA + H(+). Functionally, hydrolyzes ribosome-free peptidyl-tRNAs (with 1 or more amino acids incorporated), which drop off the ribosome during protein synthesis, or as a result of ribosome stalling. Catalyzes the release of premature peptidyl moieties from peptidyl-tRNA molecules trapped in stalled 50S ribosomal subunits, and thus maintains levels of free tRNAs and 50S ribosomes. The chain is Peptidyl-tRNA hydrolase from Moorella thermoacetica (strain ATCC 39073 / JCM 9320).